A 345-amino-acid polypeptide reads, in one-letter code: uncharacterized protein (345 aa).

Transmembrane regions (helical) follow at residues 23–43 (VVGF…YSYV) and 56–76 (FLIA…FVAL). Residues 326–345 (VTEPTTNSKRKPVKAKKAKK) form a disordered region. The span at 333–345 (SKRKPVKAKKAKK) shows a compositional bias: basic residues.

The protein localises to the cell membrane. This is an uncharacterized protein from Mycoplasma pneumoniae (strain ATCC 29342 / M129 / Subtype 1) (Mycoplasmoides pneumoniae).